The primary structure comprises 116 residues: Transmembrane protein 213 (116 aa).

An N-terminal signal peptide occupies residues 1–35; it reads MAQSGVFLRNPGHLTSAPQAALLFSLVLTSFHLSC. The Extracellular segment spans residues 36 to 79; the sequence is GTETSSSNSTLSAHHPDPGTLEQCANVDFCPLASLCCRASVDEY. A helical membrane pass occupies residues 80-100; sequence GWIAAAVGWSFWFLTLILLCV. Over 101-116 the chain is Cytoplasmic; that stretch reads DKLMKLTPEEPKDLAA.

The protein resides in the membrane. The protein is Transmembrane protein 213 (Tmem213) of Mus musculus (Mouse).